We begin with the raw amino-acid sequence, 94 residues long: Large ribosomal subunit protein bL25 (94 aa).

This sequence belongs to the bacterial ribosomal protein bL25 family. As to quaternary structure, part of the 50S ribosomal subunit; part of the 5S rRNA/L5/L18/L25 subcomplex. Contacts the 5S rRNA. Binds to the 5S rRNA independently of L5 and L18.

This is one of the proteins that binds to the 5S RNA in the ribosome where it forms part of the central protuberance. The polypeptide is Large ribosomal subunit protein bL25 (Pectobacterium atrosepticum (strain SCRI 1043 / ATCC BAA-672) (Erwinia carotovora subsp. atroseptica)).